Consider the following 415-residue polypeptide: UV excision repair protein RAD23 homolog B (415 aa).

Residues 1 to 79 (MQVTLKTLQQ…VVVMVTKPKA (79 aa)) enclose the Ubiquitin-like domain. The interval 80 to 175 (VTSAVPATTQ…STPGDSSRSN (96 aa)) is disordered. Positions 84–143 (VPATTQQSSSPSTTTVSSSPAAAVAQAPAPTPALAPTSTPASTTPASTTASSEPAPTGAT) are enriched in low complexity. Phosphothreonine is present on Thr155. A phosphoserine mark is found at Ser160 and Ser174. The residue at position 186 (Thr186) is a Phosphothreonine. The UBA 1 domain occupies 188 to 228 (QSYENMVTEIMSMGYEREQVIAALRASFNNPDRAVEYLLMG). Position 199 is a phosphoserine (Ser199). The residue at position 202 (Tyr202) is a Phosphotyrosine. An STI1 domain is found at 274-317 (HPLEFLRNQPQFQQMRQIIQQNPSLLPALLQQIGRENPQLLQQI). Residues 334–355 (EAGGQGGGGGGGGGGGGGGGGI) form a disordered region. Residues 336-355 (GGQGGGGGGGGGGGGGGGGI) are compositionally biased toward gly residues. Residues 370-410 (PQEKEAIERLKALGFPEGLVIQAYFACEKNENLAANFLLQQ) form the UBA 2 domain.

This sequence belongs to the RAD23 family. As to quaternary structure, component of the XPC complex composed of XPC, RAD23B and CETN2. Interacts with NGLY1 and PSMC1. Interacts with ATXN3. Interacts with AMFR. Interacts with VCP; the interaction is indirect and mediated by NGLY1.

The protein resides in the nucleus. It localises to the cytoplasm. Its function is as follows. Multiubiquitin chain receptor involved in modulation of proteasomal degradation. Binds to polyubiquitin chains. Proposed to be capable to bind simultaneously to the 26S proteasome and to polyubiquitinated substrates and to deliver ubiquitinated proteins to the proteasome. May play a role in endoplasmic reticulum-associated degradation (ERAD) of misfolded glycoproteins by association with PNGase and delivering deglycosylated proteins to the proteasome. Involved in global genome nucleotide excision repair (GG-NER) by acting as component of the XPC complex. Cooperatively with Cetn2 appears to stabilize Xpc. May protect Xpc from proteasomal degradation. In terms of biological role, the XPC complex is proposed to represent the first factor bound at the sites of DNA damage and together with other core recognition factors, Xpa, RPA and the TFIIH complex, is part of the pre-incision (or initial recognition) complex. The XPC complex recognizes a wide spectrum of damaged DNA characterized by distortions of the DNA helix such as single-stranded loops, mismatched bubbles or single-stranded overhangs. The orientation of XPC complex binding appears to be crucial for inducing a productive NER. XPC complex is proposed to recognize and to interact with unpaired bases on the undamaged DNA strand which is followed by recruitment of the TFIIH complex and subsequent scanning for lesions in the opposite strand in a 5'-to-3' direction by the NER machinery. Cyclobutane pyrimidine dimers (CPDs) which are formed upon UV-induced DNA damage esacpe detection by the XPC complex due to a low degree of structural perurbation. Instead they are detected by the UV-DDB complex which in turn recruits and cooperates with the XPC complex in the respective DNA repair. In vitro, the XPC:RAD23B dimer is sufficient to initiate NER; it preferentially binds to cisplatin and UV-damaged double-stranded DNA and also binds to a variety of chemically and structurally diverse DNA adducts. XPC:RAD23B contacts DNA both 5' and 3' of a cisplatin lesion with a preference for the 5' side. Xpc:Rad22b induces a bend in DNA upon binding. Xpc:Rad23b stimulates the activity of DNA glycosylases Tdg and Smug1. This chain is UV excision repair protein RAD23 homolog B (Rad23b), found in Rattus norvegicus (Rat).